The sequence spans 158 residues: MNIVQGNIEAKNAKVAIVISRFNSFLVESLLEGALDTLKRFGQVSDDNITVVRVPGAVELPLAARRVAASGKFDGIIALGAVIRGGTPHFDFVAGECNKGLAQVALEFDLPVAFGVLTTDTIEQAIERSGTKAGNKGGEAALSLLEMVNVLQELEQQL.

5-amino-6-(D-ribitylamino)uracil contacts are provided by residues Phe-22, 57–59, and 81–83; these read AVE and AVI. (2S)-2-hydroxy-3-oxobutyl phosphate is bound at residue 86–87; it reads GT. The active-site Proton donor is His-89. A 5-amino-6-(D-ribitylamino)uracil-binding site is contributed by Phe-114. Position 128 (Arg-128) interacts with (2S)-2-hydroxy-3-oxobutyl phosphate.

Belongs to the DMRL synthase family. In terms of assembly, forms an icosahedral capsid composed of 60 subunits, arranged as a dodecamer of pentamers.

It carries out the reaction (2S)-2-hydroxy-3-oxobutyl phosphate + 5-amino-6-(D-ribitylamino)uracil = 6,7-dimethyl-8-(1-D-ribityl)lumazine + phosphate + 2 H2O + H(+). It functions in the pathway cofactor biosynthesis; riboflavin biosynthesis; riboflavin from 2-hydroxy-3-oxobutyl phosphate and 5-amino-6-(D-ribitylamino)uracil: step 1/2. Functionally, catalyzes the formation of 6,7-dimethyl-8-ribityllumazine by condensation of 5-amino-6-(D-ribitylamino)uracil with 3,4-dihydroxy-2-butanone 4-phosphate. This is the penultimate step in the biosynthesis of riboflavin. The polypeptide is 6,7-dimethyl-8-ribityllumazine synthase (Shewanella putrefaciens (strain CN-32 / ATCC BAA-453)).